The chain runs to 843 residues: Glycogen phosphorylase, muscle form (843 aa).

An N-acetylserine modification is found at Ser-2. Ser-15 is subject to Phosphoserine; by PHK; in form phosphorylase A. Asp-43 and Tyr-76 together coordinate AMP. 2 positions are modified to phosphotyrosine: Tyr-204 and Tyr-227. 310–319 is a binding site for AMP; it reads RRFKSSKFGC. Ser-430 bears the Phosphoserine mark. Tyr-473 carries the post-translational modification Phosphotyrosine. Ser-514 is subject to Phosphoserine. Position 681 is an N6-(pyridoxal phosphate)lysine (Lys-681). A phosphoserine mark is found at Ser-747 and Ser-748.

This sequence belongs to the glycogen phosphorylase family. Homodimer. Homotetramer; to form the enzymatically active phosphorylase A. Pyridoxal 5'-phosphate serves as cofactor. Post-translationally, phosphorylation of Ser-15 converts phosphorylase B (unphosphorylated) to phosphorylase A.

It catalyses the reaction [(1-&gt;4)-alpha-D-glucosyl](n) + phosphate = [(1-&gt;4)-alpha-D-glucosyl](n-1) + alpha-D-glucose 1-phosphate. With respect to regulation, allosterically regulated through the non-covalent binding of metabolites, being activated by AMP and inhibited by ATP, ADP, and glucose-6-phosphate. The activity is also controlled by post-translational modifications including phosphorylation. Its function is as follows. Allosteric enzyme that catalyzes the rate-limiting step in glycogen catabolism, the phosphorolytic cleavage of glycogen to produce glucose-1-phosphate, and plays a central role in maintaining cellular and organismal glucose homeostasis. This Oryctolagus cuniculus (Rabbit) protein is Glycogen phosphorylase, muscle form.